A 226-amino-acid chain; its full sequence is MSSRERKATDTAGRHSRMDPNLSSDDSQNPGAVAAANREVLDAGREDIISSGTERQQARKEKQDLVQEFEEPPNKVLQENREKFSRIMTSSFSAMEVKIKDVLKTQCEQRQKLCQDYSLQFTNLSRKLTSDAYKLKKQAETLSNMFMEQQKFIHETLTLQKNRMEEFKSLCEKYLEKLEVLRDSRGNSIAEELRRLIATLEIKLLMLHNQQNTAAPPQSLLDVLFS.

Basic and acidic residues predominate over residues 1–18 (MSSRERKATDTAGRHSRM). The tract at residues 1 to 72 (MSSRERKATD…QDLVQEFEEP (72 aa)) is disordered. Over residues 21-30 (NLSSDDSQNP) the composition is skewed to polar residues. Composition is skewed to basic and acidic residues over residues 39-48 (EVLDAGREDI) and 56-65 (QQARKEKQDL). Residues 155–210 (ETLTLQKNRMEEFKSLCEKYLEKLEVLRDSRGNSIAEELRRLIATLEIKLLMLHNQ) adopt a coiled-coil conformation.

Belongs to the XLR/SYCP3 family. As to expression, expressed in lymphoid cells.

The polypeptide is X-linked lymphocyte-regulated protein 3A (Xlr3a) (Mus musculus (Mouse)).